The following is a 392-amino-acid chain: MALIRLGFGRQHFCLLKRRSFLMLKLAALVFAVVLFCEFLIYYLVIFRCDWPEVKTPASDSGQKTLKAMFLADTHLLGEVRGHWLDKLRREWQMERAFQTALRLLQPEVVFILGDIFDEGKWSSSQAWADDVERFQKIFRHPRHVQLKVVAGNHDIGFHYQMNAYKIKRFEKVFSPERLFSWKGINFVMVNSVALEGDGCHICSEAEAELIEISRKLNCSRKQERRSGPCPDPQLLPASAPVLLQHFPLYRRSDANCSGEDAAPLEERGIPFKERYDVLSQEASQQLLWWLRPRLILSGHTHSACEVLHGAEVPEISVPSFSWRNRNNPSFIMGSMTPTEYALAKCYLPYEDTVLATYCVAAGLLVVLILVHSELLPSPFLFGWNLLRKFKT.

A helical transmembrane segment spans residues 25–45 (KLAALVFAVVLFCEFLIYYLV). Positions 73, 115, 153, 246, 300, and 302 each coordinate a divalent metal cation. A helical membrane pass occupies residues 352-372 (DTVLATYCVAAGLLVVLILVH).

This sequence belongs to the metallophosphoesterase superfamily. MPPE1 family. In terms of assembly, interacts with GPI-anchor proteins (via the GPI portion). Interacts with TMED10. Mn(2+) is required as a cofactor.

The protein resides in the endoplasmic reticulum-Golgi intermediate compartment membrane. In terms of biological role, metallophosphoesterase that catalyzes the removal of a side-chain ethanolamine-phosphate (EtNP) from the second mannose of the GPI-anchor protein intermediate. Participates in the glycan remodeling steps of GPI-anchor maturation to allow an efficient transport of GPI-anchor proteins from the endoplasmic reticulum to the Golgi. The polypeptide is Metallophosphoesterase 1 (Ailuropoda melanoleuca (Giant panda)).